Consider the following 85-residue polypeptide: Neutrophil elastase 2A (85 aa).

The Peptidase S1 domain maps to 1-85; sequence IVGGRAAEPH…VAQGVFSFVR (85 aa). S67 functions as the Charge relay system in the catalytic mechanism.

Belongs to the peptidase S1 family. Elastase subfamily.

Its function is as follows. May be involved in the degradation of connective tissue in chronic lung disease. The protein is Neutrophil elastase 2A of Equus caballus (Horse).